Reading from the N-terminus, the 260-residue chain is Enoyl-[acyl-carrier-protein] reductase [NADH] FabI (260 aa).

NAD(+) contacts are provided by residues Gly13, 19 to 20 (SI), Gln40, 64 to 65 (DV), and Ile92. Active-site proton acceptor residues include Tyr146 and Tyr156. Residues Lys163 and 192-196 (IKTTS) contribute to the NAD(+) site.

Belongs to the short-chain dehydrogenases/reductases (SDR) family. FabI subfamily. Homotetramer.

The enzyme catalyses a 2,3-saturated acyl-[ACP] + NAD(+) = a (2E)-enoyl-[ACP] + NADH + H(+). It participates in lipid metabolism; fatty acid biosynthesis. The protein operates within cofactor biosynthesis; biotin biosynthesis. Functionally, catalyzes the reduction of a carbon-carbon double bond in an enoyl moiety that is covalently linked to an acyl carrier protein (ACP). Involved in the elongation cycle of fatty acid which are used in the lipid metabolism and in the biotin biosynthesis. In Buchnera aphidicola subsp. Schizaphis graminum (strain Sg), this protein is Enoyl-[acyl-carrier-protein] reductase [NADH] FabI (fabI).